We begin with the raw amino-acid sequence, 196 residues long: Ribosomal RNA large subunit methyltransferase E (196 aa).

Residues G52, W54, D72, D88, and D111 each contribute to the S-adenosyl-L-methionine site. Residue K151 is the Proton acceptor of the active site.

It belongs to the class I-like SAM-binding methyltransferase superfamily. RNA methyltransferase RlmE family.

Its subcellular location is the cytoplasm. The enzyme catalyses uridine(2552) in 23S rRNA + S-adenosyl-L-methionine = 2'-O-methyluridine(2552) in 23S rRNA + S-adenosyl-L-homocysteine + H(+). Functionally, specifically methylates the uridine in position 2552 of 23S rRNA at the 2'-O position of the ribose in the fully assembled 50S ribosomal subunit. The chain is Ribosomal RNA large subunit methyltransferase E from Cenarchaeum symbiosum (strain A).